Here is a 301-residue protein sequence, read N- to C-terminus: Probable 5-dehydro-4-deoxyglucarate dehydratase (301 aa).

Belongs to the DapA family.

The enzyme catalyses 5-dehydro-4-deoxy-D-glucarate + H(+) = 2,5-dioxopentanoate + CO2 + H2O. The protein operates within carbohydrate acid metabolism; D-glucarate degradation; 2,5-dioxopentanoate from D-glucarate: step 2/2. The protein is Probable 5-dehydro-4-deoxyglucarate dehydratase of Xanthobacter autotrophicus (strain ATCC BAA-1158 / Py2).